Reading from the N-terminus, the 313-residue chain is BTB/POZ domain-containing adapter for CUL3-mediated RhoA degradation protein 3 (313 aa).

Position 1 is an N-acetylmethionine (M1). Residue S23 is modified to Phosphoserine. The region spanning 32-100 is the BTB domain; sequence KYVKLNVGGA…LRDGAVPLPE (69 aa). The short motif at 239 to 245 is the PCNA-binding element; the sequence is QTKVEFP.

Belongs to the BACURD family. In terms of assembly, homotetramer; forms a two-fold symmetric tetramer in solution. Interacts with CUL3; interaction is direct and forms a 5:5 heterodecamer. Component of the BCR(BACURD3) E3 ubiquitin ligase complex, at least composed of CUL3, KCTD10/BACURD3 and RBX1. Interacts with DNA polymerase delta subunit 2/POLD2. Interacts with PCNA.

It localises to the nucleus. It functions in the pathway protein modification; protein ubiquitination. Its function is as follows. Substrate-specific adapter of a BCR (BTB-CUL3-RBX1) E3 ubiquitin-protein ligase complex. The BCR(BACURD3) E3 ubiquitin ligase complex mediates the ubiquitination of target proteins, leading to their degradation by the proteasome. This is BTB/POZ domain-containing adapter for CUL3-mediated RhoA degradation protein 3 (KCTD10) from Homo sapiens (Human).